Here is a 628-residue protein sequence, read N- to C-terminus: UvrABC system protein C (628 aa).

Positions 20-99 (TSAGVYLMRD…IKTHKPRYNV (80 aa)) constitute a GIY-YIG domain. Residues 209 to 244 (AELLAQLEDQMQTAAAAMNFEHAARLRDRITGLNQL) enclose the UVR domain.

Belongs to the UvrC family. As to quaternary structure, interacts with UvrB in an incision complex.

The protein resides in the cytoplasm. In terms of biological role, the UvrABC repair system catalyzes the recognition and processing of DNA lesions. UvrC both incises the 5' and 3' sides of the lesion. The N-terminal half is responsible for the 3' incision and the C-terminal half is responsible for the 5' incision. The protein is UvrABC system protein C of Gloeobacter violaceus (strain ATCC 29082 / PCC 7421).